The sequence spans 251 residues: tRNA (guanine-N(1)-)-methyltransferase (251 aa).

Residues Gly122 and 142–147 contribute to the S-adenosyl-L-methionine site; that span reads IGDYVL. Residues 226-251 are disordered; it reads RARRPDLFATRPQPNRQKPPKNTTDG. Positions 237–251 are enriched in polar residues; the sequence is PQPNRQKPPKNTTDG.

The protein belongs to the RNA methyltransferase TrmD family. As to quaternary structure, homodimer.

It is found in the cytoplasm. It carries out the reaction guanosine(37) in tRNA + S-adenosyl-L-methionine = N(1)-methylguanosine(37) in tRNA + S-adenosyl-L-homocysteine + H(+). Its function is as follows. Specifically methylates guanosine-37 in various tRNAs. This Rhodopseudomonas palustris (strain BisB18) protein is tRNA (guanine-N(1)-)-methyltransferase.